A 489-amino-acid chain; its full sequence is Tripartite motif-containing protein 10 (489 aa).

The RING-type zinc-finger motif lies at 16 to 61 (CPICQGTLREPVTIDCGHNFCRGCLTRYCEIPGPESEESLSCPLCK). The segment at 94 to 135 (EVEDACPEHGEKIYFFCEEDEAQLCVVCRETGQHGAHTVRFL) adopts a B box-type zinc-finger fold. C99, H102, C121, and H127 together coordinate Zn(2+). Residues 144 to 180 (EQIQKCLVCLRKEREEIQETQSRENKRIQVLLTQVAT) adopt a coiled-coil conformation. One can recognise a B30.2/SPRY domain in the interval 292-486 (QEMKTFLEKL…FSLSCQEGAV (195 aa)).

This sequence belongs to the TRIM/RBCC family. Interacts with IFNAR1; this interaction prevents association of IFNAR1 with TYK2. In terms of tissue distribution, expressed in embryonic liver.

The protein localises to the cytoplasm. Functionally, E3 ligase that plays an essential role in the differentiation and survival of terminal erythroid cells. May directly bind to PTEN and promote its ubiquitination, resulting in its proteasomal degradation and activation of hypertrophic signaling. In addition, plays a role in immune response regulation by repressing the phosphorylation of STAT1 and STAT2 in the interferon/JAK/STAT signaling pathway independent of its E3 ligase activity. Mechanistically, interacts with the intracellular domain of IFNAR1 and thereby inhibits the association between TYK2 and IFNAR1. The polypeptide is Tripartite motif-containing protein 10 (Trim10) (Mus musculus (Mouse)).